Reading from the N-terminus, the 423-residue chain is Kynureninase (423 aa).

Residues L105, S106, 133–136 (FPSD), D218, H221, and Y243 each bind pyridoxal 5'-phosphate. Residue K244 is modified to N6-(pyridoxal phosphate)lysine. Pyridoxal 5'-phosphate contacts are provided by W273 and N301.

Belongs to the kynureninase family. As to quaternary structure, homodimer. Requires pyridoxal 5'-phosphate as cofactor.

It carries out the reaction L-kynurenine + H2O = anthranilate + L-alanine + H(+). The catalysed reaction is 3-hydroxy-L-kynurenine + H2O = 3-hydroxyanthranilate + L-alanine + H(+). The protein operates within amino-acid degradation; L-kynurenine degradation; L-alanine and anthranilate from L-kynurenine: step 1/1. Its pathway is cofactor biosynthesis; NAD(+) biosynthesis; quinolinate from L-kynurenine: step 2/3. Its function is as follows. Catalyzes the cleavage of L-kynurenine (L-Kyn) and L-3-hydroxykynurenine (L-3OHKyn) into anthranilic acid (AA) and 3-hydroxyanthranilic acid (3-OHAA), respectively. The polypeptide is Kynureninase (Xanthomonas oryzae pv. oryzae (strain PXO99A)).